A 590-amino-acid chain; its full sequence is Ankyrin repeat-containing protein ITN1 (590 aa).

A disordered region spans residues 25–44; that stretch reads ENQNPMIDPSPTPSPSATAT. ANK repeat units lie at residues 73-102, 128-157, 163-192, 197-226, 231-260, 265-294, and 299-329; these read HNDT…SQME, LGET…RESI, SGYD…TLSQ, SNAT…NLLE, NNKN…QLAR, KGQT…AIVM, and SCNT…NANT. The next 4 helical transmembrane spans lie at 422-442, 460-480, 500-520, and 531-551; these read VTVV…TVPG, IFFI…VVQI, LMWL…YIVV, and VTVV…YYVV.

As to quaternary structure, interacts with REM19/RTV1. As to expression, expressed in roots, shoots, leaf vasculature and stems.

The protein localises to the cell membrane. Its function is as follows. Involved in salt stress tolerance. May act through abscisic acid (ABA) signaling pathways and promote reactive oxygen species (ROS) production. This chain is Ankyrin repeat-containing protein ITN1, found in Arabidopsis thaliana (Mouse-ear cress).